Consider the following 392-residue polypeptide: Small ribosomal subunit protein bS1 (392 aa).

S1 motif domains lie at 16–90, 108–173, 194–262, and 279–348; these read GDKV…LSKR, DEVI…LSRK, GDVI…LSIK, and DDVI…LSIK. The disordered stretch occupies residues 361–380; it reads ASTTQSYLEDDNDEDKPTLG.

It belongs to the bacterial ribosomal protein bS1 family.

In terms of biological role, binds mRNA; thus facilitating recognition of the initiation point. It is needed to translate mRNA with a short Shine-Dalgarno (SD) purine-rich sequence. The protein is Small ribosomal subunit protein bS1 (rpsA) of Staphylococcus epidermidis (strain ATCC 35984 / DSM 28319 / BCRC 17069 / CCUG 31568 / BM 3577 / RP62A).